A 473-amino-acid polypeptide reads, in one-letter code: JmjC domain-containing protein 4 (473 aa).

The region spanning 140–433 is the JmjC domain; that stretch reads PTDGLLTDFS…DFDHPYLDRN (294 aa). Residues 452–473 form a disordered region; sequence TNKKNEKRPAEDDSPSQKKTCQ.

It localises to the nucleus. Has a role in meiosis. This chain is JmjC domain-containing protein 4 (jmj4), found in Schizosaccharomyces pombe (strain 972 / ATCC 24843) (Fission yeast).